A 789-amino-acid polypeptide reads, in one-letter code: Probable 3-hydroxyacyl-CoA dehydrogenase (789 aa).

The protein belongs to the 3-hydroxyacyl-CoA dehydrogenase family.

The enzyme catalyses a (3S)-3-hydroxyacyl-CoA + NAD(+) = a 3-oxoacyl-CoA + NADH + H(+). The protein operates within lipid metabolism; fatty acid beta-oxidation. In terms of biological role, involved in the degradation of long-chain fatty acids. This Bacillus subtilis (strain 168) protein is Probable 3-hydroxyacyl-CoA dehydrogenase (fadN).